Reading from the N-terminus, the 201-residue chain is Prostamide/prostaglandin F synthase (201 aa).

This sequence belongs to the peroxiredoxin-like PRXL2 family. Prostamide/prostaglandin F synthase subfamily.

The protein resides in the cytoplasm. The protein localises to the cytosol. The catalysed reaction is prostaglandin H2 + [thioredoxin]-dithiol = prostaglandin F2alpha + [thioredoxin]-disulfide. The enzyme catalyses prostamide F2alpha + [thioredoxin]-disulfide = prostamide H2 + [thioredoxin]-dithiol. Catalyzes the reduction of prostaglandin-ethanolamide H(2) (prostamide H(2)) to prostamide F(2alpha) with NADPH as proton donor. Also able to reduce prostaglandin H(2) to prostaglandin F(2alpha). This Xenopus laevis (African clawed frog) protein is Prostamide/prostaglandin F synthase (prxl2b).